A 263-amino-acid polypeptide reads, in one-letter code: Isoprenyl transferase (263 aa).

Residue aspartate 26 is part of the active site. Mg(2+) is bound at residue aspartate 26. Residues 27-30 (GNGR), tryptophan 31, arginine 39, histidine 43, and 71-73 (SSE) each bind substrate. The Proton acceptor role is filled by asparagine 74. Substrate is bound by residues tryptophan 75, arginine 77, arginine 191, and 197–199 (RIS). Glutamate 210 is a Mg(2+) binding site. The disordered stretch occupies residues 241-263 (GRTSEQIAGQQENKNTVSNEDRV). The segment covering 243 to 263 (TSEQIAGQQENKNTVSNEDRV) has biased composition (polar residues).

Belongs to the UPP synthase family. As to quaternary structure, homodimer. The cofactor is Mg(2+).

Functionally, catalyzes the condensation of isopentenyl diphosphate (IPP) with allylic pyrophosphates generating different type of terpenoids. The protein is Isoprenyl transferase of Nitrosomonas europaea (strain ATCC 19718 / CIP 103999 / KCTC 2705 / NBRC 14298).